Here is a 379-residue protein sequence, read N- to C-terminus: CCN family member 1 (379 aa).

Positions 1-24 are cleaved as a signal peptide; the sequence is MSSSTIKTLAVAVTLLHLTRLALS. Positions 25–94 constitute an IGFBP N-terminal domain; it reads TCPAACHCPL…TALKGICRAQ (70 aa). Cystine bridges form between Cys26–Cys50, Cys30–Cys52, Cys32–Cys53, Cys39–Cys56, Cys64–Cys78, and Cys70–Cys91. One can recognise a VWFC domain in the interval 98–164; it reads RPCEYNSRIY…GQCCEEWVCD (67 aa). Ser184 bears the Phosphoserine mark. The region spanning 226–271 is the TSP type-1 domain; that stretch reads KCIVQTTSWSQCSKSCGTGISTRVTNDNSECRLVKETRICEVRPCG. A heparin-binding region spans residues 277–313; it reads SLKKGKKCSKTKKSPEPVRFTYAGCSSVKKYRPKYCG. Disulfide bonds link Cys284–Cys321, Cys301–Cys335, Cys312–Cys351, Cys315–Cys353, and Cys320–Cys357. The CTCK domain maps to 284 to 358; it reads CSKTKKSPEP…QSCKCNYNCP (75 aa).

This sequence belongs to the CCN family. As to quaternary structure, interaction with integrins is heparin- and cell-type-dependent and promotes cell adhesion.

The protein localises to the secreted. Functionally, promotes cell proliferation, chemotaxis, angiogenesis and cell adhesion. Appears to play a role in wound healing by up-regulating, in skin fibroblasts, the expression of a number of genes involved in angiogenesis, inflammation and matrix remodeling including VEGA-A, VEGA-C, MMP1, MMP3, TIMP1, uPA, PAI-1 and integrins alpha-3 and alpha-5. CCN1-mediated gene regulation is dependent on heparin-binding. Down-regulates the expression of alpha-1 and alpha-2 subunits of collagen type-1. Promotes cell adhesion and adhesive signaling through integrin alpha-6/beta-1, cell migration through integrin alpha-1/beta-5 and cell proliferation through integrin alpha-v/beta-3. The chain is CCN family member 1 from Rattus norvegicus (Rat).